A 176-amino-acid polypeptide reads, in one-letter code: Ribosome maturation factor RimM (176 aa).

The region spanning 100 to 173 (EGEFHLLDLV…WLRLTPPPGL (74 aa)) is the PRC barrel domain.

It belongs to the RimM family. As to quaternary structure, binds ribosomal protein uS19.

The protein localises to the cytoplasm. Its function is as follows. An accessory protein needed during the final step in the assembly of 30S ribosomal subunit, possibly for assembly of the head region. Essential for efficient processing of 16S rRNA. May be needed both before and after RbfA during the maturation of 16S rRNA. It has affinity for free ribosomal 30S subunits but not for 70S ribosomes. The sequence is that of Ribosome maturation factor RimM from Prochlorococcus marinus (strain MIT 9313).